The primary structure comprises 565 residues: NAD-dependent malic enzyme (565 aa).

The active-site Proton donor is Tyr-104. Position 157 (Arg-157) interacts with NAD(+). Lys-175 serves as the catalytic Proton acceptor. Glu-246, Asp-247, and Asp-270 together coordinate a divalent metal cation. Asp-270 and Asn-418 together coordinate NAD(+).

This sequence belongs to the malic enzymes family. In terms of assembly, homotetramer. Mg(2+) serves as cofactor. It depends on Mn(2+) as a cofactor.

The catalysed reaction is (S)-malate + NAD(+) = pyruvate + CO2 + NADH. The enzyme catalyses oxaloacetate + H(+) = pyruvate + CO2. In Klebsiella pneumoniae subsp. pneumoniae (strain ATCC 700721 / MGH 78578), this protein is NAD-dependent malic enzyme.